Reading from the N-terminus, the 83-residue chain is Exodeoxyribonuclease 7 small subunit (83 aa).

The protein belongs to the XseB family. Heterooligomer composed of large and small subunits.

It localises to the cytoplasm. The catalysed reaction is Exonucleolytic cleavage in either 5'- to 3'- or 3'- to 5'-direction to yield nucleoside 5'-phosphates.. In terms of biological role, bidirectionally degrades single-stranded DNA into large acid-insoluble oligonucleotides, which are then degraded further into small acid-soluble oligonucleotides. The chain is Exodeoxyribonuclease 7 small subunit from Allorhizobium ampelinum (strain ATCC BAA-846 / DSM 112012 / S4) (Agrobacterium vitis (strain S4)).